The following is a 210-amino-acid chain: Redox-sensing transcriptional repressor Rex (210 aa).

Positions 16 to 55 form a DNA-binding region, H-T-H motif; the sequence is IYMRTLQELLEDDVDVISSERLAKQCGVNPAQIRKDLAYF. NAD(+) is bound at residue 90 to 95; the sequence is GLGNLG.

This sequence belongs to the transcriptional regulatory Rex family. In terms of assembly, homodimer.

The protein resides in the cytoplasm. Its function is as follows. Modulates transcription in response to changes in cellular NADH/NAD(+) redox state. This Syntrophobacter fumaroxidans (strain DSM 10017 / MPOB) protein is Redox-sensing transcriptional repressor Rex.